Here is a 419-residue protein sequence, read N- to C-terminus: Adenylosuccinate synthetase (419 aa).

Residues 11-17 (GDEGKGK) and 39-41 (GHT) each bind GTP. The active-site Proton acceptor is the D12. Residues D12 and G39 each contribute to the Mg(2+) site. IMP is bound by residues 12-15 (DEGK), 37-40 (NAGH), T129, R143, N218, T233, and R297. The active-site Proton donor is H40. 293–299 (VTTGRKR) is a binding site for substrate. GTP-binding positions include R299, 325 to 327 (KLD), and 407 to 409 (GTG).

This sequence belongs to the adenylosuccinate synthetase family. In terms of assembly, homodimer. Mg(2+) serves as cofactor.

The protein resides in the cytoplasm. The enzyme catalyses IMP + L-aspartate + GTP = N(6)-(1,2-dicarboxyethyl)-AMP + GDP + phosphate + 2 H(+). Its pathway is purine metabolism; AMP biosynthesis via de novo pathway; AMP from IMP: step 1/2. In terms of biological role, plays an important role in the de novo pathway and in the salvage pathway of purine nucleotide biosynthesis. Catalyzes the first committed step in the biosynthesis of AMP from IMP. In Coccidioides posadasii (strain C735) (Valley fever fungus), this protein is Adenylosuccinate synthetase.